Reading from the N-terminus, the 556-residue chain is MSKSIEKFPKELVSPIAQLHSLVEKNSKLHIKELFAAEQDRFQNYSVKFDQLVFDYSKHRITKSVLEQLFALAKTKQLTHWIERLFSQDKVNCTEQRAAMHWALRLPSEYSKFPELTKQVHTQLQRMYALVEKIHAGQYRGATGEVIQDVVNIGVGGSDLGPQMVTHALCDFKVKTAKPLNVHFVSTMDGSQLSDLLHQLRPETTLFIISSKSFGTIDTLSNAQTVRQWLEKALGKHDRVVKSHFIGVSTKAEKMTEWGIAPENQLLLWDWVGGRYSLWSCIGFPIALTIGIDGFQQLLAGAHAVDEHFQNTSFEQNIPVLMALLGIWNNNFLNIQTHAVLPYDGRLKYFAAYLQQLEMESNGKSVQRDGQKVELDTCPIVWGEVGPNAQHAFYQLLHQGTQAVSCDFIAPIQRYNADHFTYVENAEALIEQHHLALSNCLAQSRLLAFGNEALDSAELKNLPIYKQYEGNQPSSTLLLKELNPYSLGMLIALYEHKVFVQSVIWNINPFDQWGVEKGKQIADQLLPILNGAQNDLSALDASTRGLIKILLGKVDG.

Residue Glu360 is the Proton donor of the active site. Residues His391 and Lys519 contribute to the active site.

The protein belongs to the GPI family.

Its subcellular location is the cytoplasm. The catalysed reaction is alpha-D-glucose 6-phosphate = beta-D-fructose 6-phosphate. It participates in carbohydrate biosynthesis; gluconeogenesis. It functions in the pathway carbohydrate degradation; glycolysis; D-glyceraldehyde 3-phosphate and glycerone phosphate from D-glucose: step 2/4. Its function is as follows. Catalyzes the reversible isomerization of glucose-6-phosphate to fructose-6-phosphate. This chain is Glucose-6-phosphate isomerase, found in Acinetobacter baumannii (strain ATCC 17978 / DSM 105126 / CIP 53.77 / LMG 1025 / NCDC KC755 / 5377).